Consider the following 129-residue polypeptide: uncharacterized protein (129 aa).

The segment at serine 34–valine 57 is disordered.

This is an uncharacterized protein from Homo sapiens (Human).